Reading from the N-terminus, the 251-residue chain is Small ribosomal subunit protein uS2 (251 aa).

This sequence belongs to the universal ribosomal protein uS2 family.

The sequence is that of Small ribosomal subunit protein uS2 from Nitrosomonas europaea (strain ATCC 19718 / CIP 103999 / KCTC 2705 / NBRC 14298).